Reading from the N-terminus, the 625-residue chain is Chaperone protein HtpG (625 aa).

Residues 1–332 (MSKKTNAPVQ…TEDLSLNVSR (332 aa)) are a; substrate-binding. Residues 333-545 (EVVQSSPVMA…KDAMDSQMER (213 aa)) are b. The tract at residues 546–625 (MMKMMQQEMP…ELIEAATLSR (80 aa)) is c.

Belongs to the heat shock protein 90 family. As to quaternary structure, homodimer.

Its subcellular location is the cytoplasm. Its function is as follows. Molecular chaperone. Has ATPase activity. This is Chaperone protein HtpG from Chlorobium phaeovibrioides (strain DSM 265 / 1930) (Prosthecochloris vibrioformis (strain DSM 265)).